A 242-amino-acid polypeptide reads, in one-letter code: Protein HTATIP2 (242 aa).

Alanine 2 bears the N-acetylalanine mark. Positions 2-25 (AETEALSKLREDFRMQNKSVFILG) are required for interaction with elongation factor EEF1A1. NADPH contacts are provided by serine 27, glycine 28, glutamate 29, threonine 30, arginine 52, arginine 53, leucine 92, glycine 93, tyrosine 143, lysine 147, and arginine 178. Catalysis depends on tyrosine 143, which acts as the Proton acceptor. Residue lysine 147 is part of the active site.

As to quaternary structure, monomer. Forms homodimers during oxidative stress. Interacts (via N-terminus) with elongation factor EEF1A1 (via middle-region); the interaction is direct and competes with EEF1A1 binding to guanyl-nucleotide exchange factor EEF1B2, thereby inhibiting GDP for GTP exchange and reactivation of EEF1A1. Interacts with nuclear transport receptors XPO4, IPO5/RANBP5, IPO7, IPO9 and KPNB1 as well as GCN1L1/GCN1 and LRPPRC probably through their HEAT repeats. Binds NCOA5/CIA.

The protein resides in the cytoplasm. Represses translation by preventing reactivation of elongation factor eEF1A. May also inhibit nuclear import by competing with nuclear import substrates for binding to a subset of nuclear transport receptors. Has additionally been proposed to act as a redox sensor involved in cellular oxidative stress surveillance. The protein is Protein HTATIP2 (HTATIP2) of Pan paniscus (Pygmy chimpanzee).